Here is a 290-residue protein sequence, read N- to C-terminus: MEGSVNQSKWQAYSHLMRINKPIGTLLLLWPTLWALWLAGKGVPSLSILVVFVVGVFLMRAAGCVVNDYADRAVDGHVKRTAARPMPSGRVSEKEAKVLFVVLVLVSFGLVLTLNAMTIWLSLAALALAWAYPFMKRVTHLPQFVLGAAFGWGIPMAYAAVSESLPLSCWLLLLANICWTVAYDTLYAMVDRDDDLKIGIKSTAILFGRYDKLIVGLLQFATLLLMLWVGYLTQMSGAFYWSLLLAGALFIHQQKQIATRERDACFKAFMDNNYVGLVLFIGIALSYWQG.

The next 8 helical transmembrane spans lie at 23-43, 46-66, 99-119, 141-161, 170-190, 213-233, 234-254, and 268-288; these read IGTL…GKGV, LSIL…GCVV, LFVV…AMTI, LPQF…YAAV, WLLL…YAMV, LIVG…GYLT, QMSG…IHQQ, and AFMD…LSYW.

It belongs to the UbiA prenyltransferase family. It depends on Mg(2+) as a cofactor.

It localises to the cell inner membrane. The enzyme catalyses all-trans-octaprenyl diphosphate + 4-hydroxybenzoate = 4-hydroxy-3-(all-trans-octaprenyl)benzoate + diphosphate. Its pathway is cofactor biosynthesis; ubiquinone biosynthesis. Functionally, catalyzes the prenylation of para-hydroxybenzoate (PHB) with an all-trans polyprenyl group. Mediates the second step in the final reaction sequence of ubiquinone-8 (UQ-8) biosynthesis, which is the condensation of the polyisoprenoid side chain with PHB, generating the first membrane-bound Q intermediate 3-octaprenyl-4-hydroxybenzoate. This Serratia proteamaculans (strain 568) protein is 4-hydroxybenzoate octaprenyltransferase.